The sequence spans 333 residues: 4-hydroxyproline epimerase (333 aa).

The active-site Proton acceptor is Cys-90. Residues Gly-91–His-92 and Asp-249 each bind substrate. The active-site Proton donor is Cys-253. Gly-254 to Thr-255 contacts substrate.

This sequence belongs to the proline racemase family. In terms of assembly, homodimer.

The enzyme catalyses trans-4-hydroxy-L-proline = cis-4-hydroxy-D-proline. Functionally, allows intracellular utilization of 4-hydroxyproline, one of the major constituents of host collagen, by converting 4-hydroxy-L-proline to 4-hydroxy-D-proline, which can be further metabolized by intracellular 4-hydroxy-D-proline oxidases. Strong B-cell mitogen. Plays an important role in the regulation of intra- and extracellular amino acid pools, allowing the bacterium to profit from host precursors and enzymatic pathways. The chain is 4-hydroxyproline epimerase from Brucella abortus (strain S19).